The sequence spans 171 residues: MPLLDSFTVDHTRMEAPAVRVAKTMNTPHGDAITVFDLRFCVPNKEVMPERGIHTLEHLFAGFMRNHLNGNGVEIIDISPMGCRTGFYMSLIGTPDEQRVADAWKAAMEDVLKVQDQNQIPELNVYQCGTYQMHSLQEAQDIARNILERDVRINSNEELALPKEKLQELHI.

Fe cation-binding residues include H54, H58, and C128.

It belongs to the LuxS family. As to quaternary structure, homodimer. It depends on Fe cation as a cofactor.

It carries out the reaction S-(5-deoxy-D-ribos-5-yl)-L-homocysteine = (S)-4,5-dihydroxypentane-2,3-dione + L-homocysteine. In terms of biological role, involved in the synthesis of autoinducer 2 (AI-2) which is secreted by bacteria and is used to communicate both the cell density and the metabolic potential of the environment. The regulation of gene expression in response to changes in cell density is called quorum sensing. Catalyzes the transformation of S-ribosylhomocysteine (RHC) to homocysteine (HC) and 4,5-dihydroxy-2,3-pentadione (DPD). The sequence is that of S-ribosylhomocysteine lyase from Escherichia coli O81 (strain ED1a).